A 318-amino-acid polypeptide reads, in one-letter code: Acetyl-coenzyme A carboxylase carboxyl transferase subunit alpha (318 aa).

The 254-residue stretch at 39–292 (LTDKSEKQLR…GDSIAAELPD (254 aa)) folds into the CoA carboxyltransferase C-terminal domain.

It belongs to the AccA family. In terms of assembly, acetyl-CoA carboxylase is a heterohexamer composed of biotin carboxyl carrier protein (AccB), biotin carboxylase (AccC) and two subunits each of ACCase subunit alpha (AccA) and ACCase subunit beta (AccD).

The protein resides in the cytoplasm. It catalyses the reaction N(6)-carboxybiotinyl-L-lysyl-[protein] + acetyl-CoA = N(6)-biotinyl-L-lysyl-[protein] + malonyl-CoA. The protein operates within lipid metabolism; malonyl-CoA biosynthesis; malonyl-CoA from acetyl-CoA: step 1/1. Its function is as follows. Component of the acetyl coenzyme A carboxylase (ACC) complex. First, biotin carboxylase catalyzes the carboxylation of biotin on its carrier protein (BCCP) and then the CO(2) group is transferred by the carboxyltransferase to acetyl-CoA to form malonyl-CoA. This Gluconacetobacter diazotrophicus (strain ATCC 49037 / DSM 5601 / CCUG 37298 / CIP 103539 / LMG 7603 / PAl5) protein is Acetyl-coenzyme A carboxylase carboxyl transferase subunit alpha.